A 122-amino-acid polypeptide reads, in one-letter code: Toxin CSTX-1 (122 aa).

Residues 1-20 (MKVLIISAVLFITIFSNISA) form the signal peptide. Residues 21–47 (EIEDDFLEDESFEAEDIIPFFENEQAR) constitute a propeptide that is removed on maturation. 4 disulfides stabilise this stretch: cysteine 49/cysteine 64, cysteine 56/cysteine 73, cysteine 63/cysteine 91, and cysteine 75/cysteine 89. The predicted alpha-helix stretch occupies residues 99-112 (AIETGLNIFRGLFK). Arginine 108 carries the arginine amide; in CSTX-2a modification. A Lysine amide; in omega-ctenitoxin-Cs1a modification is found at lysine 121.

Belongs to the neurotoxin 19 (CSTX) family. 04 (U1-Lctx) subfamily. In terms of assembly, monomer. Interacts with CSTX-13 (AC P83919) (Kd=430 nM), but does not interact with CSTX-9 (AC P58604). Expressed by the venom gland.

The protein localises to the secreted. Its subcellular location is the target cell membrane. Its function is as follows. Spider venom toxin that shows calcium channel blocking activity and exhibits cytolytic activity by affecting the outer leaflet curvature and/or pore formation across the membrane. It blocks L-type calcium channels (Cav1/CACNA1) in mammalian neurons at nanomolar concentrations. Furthermore, it produces a slow voltage-independent block of mid/low and high voltage-activated calcium channels in cockroach neurons. Potassium ions, histamine, M-ctenitoxin-Cs1a (AC P83619), CSTX-9 (AC P58604), and CSTX-13 (AC P83919) synergistically increase the insecticidal activity of this toxin. In vivo, it causes paralysis in blow flies and provokes death in drosophila. In terms of biological role, blocks voltage-activated calcium channels (Cav). Does not induce cell membrane permeability increase when tested on Xenopus oocytes. No alpha-helical structures are detectable. Is 7-fold less neurotoxic than omega-ctenitoxin-Cs1a on drosophila flies. Functionally, blocks voltage-activated calcium channels (Cav). Is 190-fold less neurotoxic than omega-ctenitoxin-Cs1a on drosophila flies. The protein is Toxin CSTX-1 of Cupiennius salei (American wandering spider).